The following is a 455-amino-acid chain: Argininosuccinate lyase (455 aa).

This sequence belongs to the lyase 1 family. Argininosuccinate lyase subfamily.

The protein resides in the cytoplasm. The enzyme catalyses 2-(N(omega)-L-arginino)succinate = fumarate + L-arginine. It functions in the pathway amino-acid biosynthesis; L-arginine biosynthesis; L-arginine from L-ornithine and carbamoyl phosphate: step 3/3. In Caulobacter vibrioides (strain ATCC 19089 / CIP 103742 / CB 15) (Caulobacter crescentus), this protein is Argininosuccinate lyase.